The primary structure comprises 326 residues: GTP 3',8-cyclase (326 aa).

Positions 6-220 constitute a Radical SAM core domain; it reads SFGRRINYLR…DRISASYELE (215 aa). Residue R15 coordinates GTP. [4Fe-4S] cluster-binding residues include C22 and C26. Y28 serves as a coordination point for S-adenosyl-L-methionine. C29 is a [4Fe-4S] cluster binding site. R65 is a binding site for GTP. G69 provides a ligand contact to S-adenosyl-L-methionine. Position 96 (T96) interacts with GTP. S120 contacts S-adenosyl-L-methionine. K157 contributes to the GTP binding site. M191 contacts S-adenosyl-L-methionine. Residues C254 and C257 each coordinate [4Fe-4S] cluster. GTP is bound at residue 259 to 261; it reads RVR. C271 serves as a coordination point for [4Fe-4S] cluster.

It belongs to the radical SAM superfamily. MoaA family. As to quaternary structure, monomer and homodimer. It depends on [4Fe-4S] cluster as a cofactor.

The enzyme catalyses GTP + AH2 + S-adenosyl-L-methionine = (8S)-3',8-cyclo-7,8-dihydroguanosine 5'-triphosphate + 5'-deoxyadenosine + L-methionine + A + H(+). It functions in the pathway cofactor biosynthesis; molybdopterin biosynthesis. Its function is as follows. Catalyzes the cyclization of GTP to (8S)-3',8-cyclo-7,8-dihydroguanosine 5'-triphosphate. The polypeptide is GTP 3',8-cyclase (Geobacter sulfurreducens (strain ATCC 51573 / DSM 12127 / PCA)).